We begin with the raw amino-acid sequence, 959 residues long: Probable serine/threonine-protein kinase DDB_G0291664 (959 aa).

The tract at residues 154 to 213 (QQQQQQQLTPPPSPPLLPIPQPPAQNEEQQLTQPPSIPPPQQKQIKIQKSDRGTQVKSIT) is disordered. Positions 162 to 176 (TPPPSPPLLPIPQPP) are enriched in pro residues. 2 ANK repeats span residues 294 to 324 (KGET…CMGI) and 333 to 362 (LNKN…PLKM). A Protein kinase domain is found at 482 to 762 (IDFHTQIGSA…EVGIIETEFL (281 aa)). ATP-binding positions include 488–496 (IGSAGNASV) and K509. D610 functions as the Proton acceptor in the catalytic mechanism. The tract at residues 904 to 959 (NNINNNNNNNNNCNNSKKFKTTSESTSALGSDASSSSSPSSSSPSPKYSASIYHHQ) is disordered.

Belongs to the protein kinase superfamily. Ser/Thr protein kinase family.

The catalysed reaction is L-seryl-[protein] + ATP = O-phospho-L-seryl-[protein] + ADP + H(+). It catalyses the reaction L-threonyl-[protein] + ATP = O-phospho-L-threonyl-[protein] + ADP + H(+). This Dictyostelium discoideum (Social amoeba) protein is Probable serine/threonine-protein kinase DDB_G0291664.